The sequence spans 274 residues: Transcription factor Ovo-like 2 (274 aa).

The span at 1–11 (MPKVFLVKRRS) shows a compositional bias: basic residues. The disordered stretch occupies residues 1–88 (MPKVFLVKRR…ETPELHDAQG (88 aa)). The span at 18-29 (SWDELPDDKRAD) shows a compositional bias: basic and acidic residues. The segment covering 50–74 (DGGSSSGCSSSAGEPGGAESSSSPR) has biased composition (low complexity). 4 C2H2-type zinc fingers span residues 118–140 (HNCDLCGKSFRLQRMLNRHLKCH), 146–168 (HLCTFCGKGFNDTFDLKRHVRTH), 174–197 (YKCEVCNKAFTQRCSLESHLKKIH), and 213–236 (YVCEDCGYTGPTQEDLYLHVNSDH). Serine 268 carries the phosphoserine modification.

Belongs to the krueppel C2H2-type zinc-finger protein family. Interacts (via zinc-finger domains) with CEBPA (via bZIP domain); the interaction inhibits the transcription factor activity of CEBPA and is required to repress adipogenesis. Expressed highly in testis, specifically in spermatocytes. Expressed also in skin and at lower levels in the ovary. Expressed in adipose tissues. Expression is lower than in testis and a relatively higher expression level is detected in the stromal vascular fraction (SVF) than in fat cells themselves.

It localises to the nucleus. In terms of biological role, zinc-finger transcription repressor factor. Plays a critical role in maintaining the identity of epithelial lineages by suppressing epithelial-to mesenchymal transition (EMT) mainly through the repression of ZEB1, an EMT inducer. Positively regulates neuronal differentiation. Suppresses cell cycling and terminal differentiation of keratinocytes by directly repressing MYC and NOTCH1. Important for the correct development of primordial germ cells in embryos. Plays dual functions in thermogenesis and adipogenesis to maintain energy balance. Essential for brown/beige adipose tissue-mediated thermogenesis, is necessary for the development of brown adipocytes. In white adipose tissues, limits adipogenesis by blocking CEBPA binding to its transcriptional targets and inhibiting its transcription factor activity. This chain is Transcription factor Ovo-like 2, found in Mus musculus (Mouse).